The primary structure comprises 535 residues: Light-independent protochlorophyllide reductase subunit B (535 aa).

Asp-36 contributes to the [4Fe-4S] cluster binding site. The active-site Proton donor is the Asp-292. 428–429 (GL) contacts substrate.

Belongs to the ChlB/BchB/BchZ family. In terms of assembly, protochlorophyllide reductase is composed of three subunits; BchL, BchN and BchB. Forms a heterotetramer of two BchB and two BchN subunits. [4Fe-4S] cluster serves as cofactor.

The enzyme catalyses chlorophyllide a + oxidized 2[4Fe-4S]-[ferredoxin] + 2 ADP + 2 phosphate = protochlorophyllide a + reduced 2[4Fe-4S]-[ferredoxin] + 2 ATP + 2 H2O. Its pathway is porphyrin-containing compound metabolism; bacteriochlorophyll biosynthesis (light-independent). In terms of biological role, component of the dark-operative protochlorophyllide reductase (DPOR) that uses Mg-ATP and reduced ferredoxin to reduce ring D of protochlorophyllide (Pchlide) to form chlorophyllide a (Chlide). This reaction is light-independent. The NB-protein (BchN-BchB) is the catalytic component of the complex. This chain is Light-independent protochlorophyllide reductase subunit B, found in Chlorobaculum parvum (strain DSM 263 / NCIMB 8327) (Chlorobium vibrioforme subsp. thiosulfatophilum).